The chain runs to 216 residues: Small ribosomal subunit protein uS3 (216 aa).

Positions 38–108 constitute a KH type-2 domain; sequence LREFVKKKLH…DLAIDIQEVK (71 aa).

This sequence belongs to the universal ribosomal protein uS3 family. Part of the 30S ribosomal subunit. Forms a tight complex with proteins S10 and S14.

Its function is as follows. Binds the lower part of the 30S subunit head. Binds mRNA in the 70S ribosome, positioning it for translation. The protein is Small ribosomal subunit protein uS3 of Desulfosudis oleivorans (strain DSM 6200 / JCM 39069 / Hxd3) (Desulfococcus oleovorans).